Consider the following 216-residue polypeptide: MRGILGLVFGSVILIYLISLFLMKHPFFQIREIKVSGLYVEEIEKIEKDIHALGRGLLVIPESNILELFNEKLNNRFQGVEINKRFSTEGITIEMNFQRRKAISFVNINEKKFLMDMEGIFFWDEYQKPDKTLFIYSKEVFQFFKQKILKLLTQGNSVKVYKDKVMVDIGGKRFILPPLEDINEKEIHLMKKLLKLHPDAKIFDIRYKGFILLNEG.

A helical membrane pass occupies residues 5–22; sequence LGLVFGSVILIYLISLFL.

It is found in the membrane. This is an uncharacterized protein from Aquifex aeolicus (strain VF5).